Here is a 207-residue protein sequence, read N- to C-terminus: Serotonin N-acetyltransferase (207 aa).

Positions 1 to 28 (MSMQSTHPPKPEAPRLPPGIPESPSCQR) are disordered. Thr-31 carries the post-translational modification Phosphothreonine; by PKA. The 168-residue stretch at 35–202 (SEFRCLTPED…CSLRDHPFLR (168 aa)) folds into the N-acetyltransferase domain. Leu-124 contributes to the substrate binding site. Acetyl-CoA contacts are provided by residues 124–126 (LAV) and 132–137 (QQGRGP). Substrate is bound at residue Met-159. 168 to 170 (YER) lines the acetyl-CoA pocket. Ser-205 bears the Phosphoserine mark.

Belongs to the acetyltransferase family. AANAT subfamily. In terms of assembly, monomer. Interacts with several 14-3-3 proteins, including YWHAB, YWHAE, YWHAG and YWHAZ, preferentially when phosphorylated at Thr-31. Phosphorylation on Ser-205 also allows binding to YWHAZ, but with lower affinity. The interaction with YWHAZ considerably increases affinity for arylalkylamines and acetyl-CoA and protects the enzyme from dephosphorylation and proteasomal degradation. It may also prevent thiol-dependent inactivation. Post-translationally, cAMP-dependent phosphorylation on both N-terminal Thr-31 and C-terminal Ser-205 regulates AANAT activity by promoting interaction with 14-3-3 proteins.

It localises to the cytoplasm. The enzyme catalyses a 2-arylethylamine + acetyl-CoA = an N-acetyl-2-arylethylamine + CoA + H(+). Its pathway is aromatic compound metabolism; melatonin biosynthesis; melatonin from serotonin: step 1/2. Functionally, controls the night/day rhythm of melatonin production in the pineal gland. Catalyzes the N-acetylation of serotonin into N-acetylserotonin, the penultimate step in the synthesis of melatonin. In Pan troglodytes (Chimpanzee), this protein is Serotonin N-acetyltransferase (AANAT).